Here is a 140-residue protein sequence, read N- to C-terminus: Putative pre-16S rRNA nuclease (140 aa).

The protein belongs to the YqgF nuclease family.

Its subcellular location is the cytoplasm. Functionally, could be a nuclease involved in processing of the 5'-end of pre-16S rRNA. The polypeptide is Putative pre-16S rRNA nuclease (Parabacteroides distasonis (strain ATCC 8503 / DSM 20701 / CIP 104284 / JCM 5825 / NCTC 11152)).